Consider the following 262-residue polypeptide: Type III pantothenate kinase (262 aa).

9–16 (DAGNSRIK) lines the ATP pocket. Residues Tyr-96 and 103–106 (GSDR) contribute to the substrate site. Asp-105 functions as the Proton acceptor in the catalytic mechanism. ATP is bound at residue Thr-129. Position 189 (Thr-189) interacts with substrate.

The protein belongs to the type III pantothenate kinase family. Homodimer. Requires NH4(+) as cofactor. The cofactor is K(+).

Its subcellular location is the cytoplasm. The enzyme catalyses (R)-pantothenate + ATP = (R)-4'-phosphopantothenate + ADP + H(+). It participates in cofactor biosynthesis; coenzyme A biosynthesis; CoA from (R)-pantothenate: step 1/5. Catalyzes the phosphorylation of pantothenate (Pan), the first step in CoA biosynthesis. The sequence is that of Type III pantothenate kinase from Burkholderia vietnamiensis (strain G4 / LMG 22486) (Burkholderia cepacia (strain R1808)).